The sequence spans 98 residues: Essential MCU regulator, mitochondrial (98 aa).

Residues 52 to 72 (ITPFGLFGIIATVIPGLLIGA) form a helical membrane-spanning segment.

The protein belongs to the SMDT1/EMRE family.

The protein localises to the mitochondrion inner membrane. Essential regulatory subunit of the mitochondrial calcium uniporter (mcu) channel, a protein that mediates calcium uptake into mitochondria. The polypeptide is Essential MCU regulator, mitochondrial (Anopheles gambiae (African malaria mosquito)).